Here is a 323-residue protein sequence, read N- to C-terminus: MAFLEDGNHTAVTEFILVGLTDDPVLKVILFTIILCIYLVTVSGNLSTILLIRVSSQLHHPMYFFLSHLASVDLGYSSSVTPNMLINFLAENNTISYIGCSIQFGSATFFGVLECFLLAVMAYDRFVAICNPLLYSIKMSTQVCVKLVVGSYIGSSLNASFVTVSIFNLLFCGPNKINHFFCDFDPLIELSCSDVSVPVAVTSCSAGLITMITVFVIAVSYTYILITVLKMRSTEGRHKAFSTCTSHLTAVTLFYGTVTFIYVMPKSNYSTDQNKVVSVFYMVVIPMLNPLIYSLRNNEIKGALKRQLGKKIFSQSNILFCKS.

Over 1-28 the chain is Extracellular; it reads MAFLEDGNHTAVTEFILVGLTDDPVLKV. The N-linked (GlcNAc...) asparagine glycan is linked to asparagine 8. A helical transmembrane segment spans residues 29 to 49; sequence ILFTIILCIYLVTVSGNLSTI. Topologically, residues 50–57 are cytoplasmic; the sequence is LLIRVSSQ. The chain crosses the membrane as a helical span at residues 58-78; that stretch reads LHHPMYFFLSHLASVDLGYSS. Residues 79-102 are Extracellular-facing; it reads SVTPNMLINFLAENNTISYIGCSI. N-linked (GlcNAc...) asparagine glycosylation is present at asparagine 92. A disulfide bridge links cysteine 100 with cysteine 192. Residues 103 to 123 traverse the membrane as a helical segment; sequence QFGSATFFGVLECFLLAVMAY. Residues 124–136 lie on the Cytoplasmic side of the membrane; sequence DRFVAICNPLLYS. A helical membrane pass occupies residues 137–157; the sequence is IKMSTQVCVKLVVGSYIGSSL. Topologically, residues 158-199 are extracellular; the sequence is NASFVTVSIFNLLFCGPNKINHFFCDFDPLIELSCSDVSVPV. The chain crosses the membrane as a helical span at residues 200 to 220; it reads AVTSCSAGLITMITVFVIAVS. The Cytoplasmic segment spans residues 221–240; it reads YTYILITVLKMRSTEGRHKA. A helical membrane pass occupies residues 241 to 261; sequence FSTCTSHLTAVTLFYGTVTFI. Topologically, residues 262-274 are extracellular; the sequence is YVMPKSNYSTDQN. N-linked (GlcNAc...) asparagine glycosylation occurs at asparagine 268. Residues 275–295 traverse the membrane as a helical segment; that stretch reads KVVSVFYMVVIPMLNPLIYSL. Topologically, residues 296–323 are cytoplasmic; the sequence is RNNEIKGALKRQLGKKIFSQSNILFCKS.

This sequence belongs to the G-protein coupled receptor 1 family.

It is found in the cell membrane. Functionally, potential odorant receptor. The sequence is that of Olfactory receptor 5P58 from Mus musculus (Mouse).